We begin with the raw amino-acid sequence, 497 residues long: Guanosine-5'-triphosphate,3'-diphosphate pyrophosphatase (497 aa).

The protein belongs to the GppA/Ppx family. GppA subfamily.

It catalyses the reaction guanosine 3'-diphosphate 5'-triphosphate + H2O = guanosine 3',5'-bis(diphosphate) + phosphate + H(+). Its pathway is purine metabolism; ppGpp biosynthesis; ppGpp from GTP: step 2/2. Functionally, catalyzes the conversion of pppGpp to ppGpp. Guanosine pentaphosphate (pppGpp) is a cytoplasmic signaling molecule which together with ppGpp controls the 'stringent response', an adaptive process that allows bacteria to respond to amino acid starvation, resulting in the coordinated regulation of numerous cellular activities. The sequence is that of Guanosine-5'-triphosphate,3'-diphosphate pyrophosphatase from Vibrio atlanticus (strain LGP32) (Vibrio splendidus (strain Mel32)).